Here is a 365-residue protein sequence, read N- to C-terminus: Fructose-1,6-bisphosphatase class 1 2 (365 aa).

Mg(2+)-binding residues include glutamate 100, aspartate 122, leucine 124, and aspartate 125. Substrate contacts are provided by residues 125–128 (DGSS) and asparagine 221. Glutamate 293 provides a ligand contact to Mg(2+).

It belongs to the FBPase class 1 family. In terms of assembly, homotetramer. It depends on Mg(2+) as a cofactor.

It localises to the cytoplasm. The catalysed reaction is beta-D-fructose 1,6-bisphosphate + H2O = beta-D-fructose 6-phosphate + phosphate. Its pathway is carbohydrate biosynthesis; gluconeogenesis. The chain is Fructose-1,6-bisphosphatase class 1 2 from Leptothrix cholodnii (strain ATCC 51168 / LMG 8142 / SP-6) (Leptothrix discophora (strain SP-6)).